Here is a 280-residue protein sequence, read N- to C-terminus: Probable cell division protein WhiA (280 aa).

A DNA-binding region (H-T-H motif) is located at residues 247 to 279 (SLEQIANFFFTKYNIKISRSGIQHFSVNLKKLC).

Belongs to the WhiA family.

Involved in cell division and chromosome segregation. This chain is Probable cell division protein WhiA, found in Mycoplasma genitalium (strain ATCC 33530 / DSM 19775 / NCTC 10195 / G37) (Mycoplasmoides genitalium).